We begin with the raw amino-acid sequence, 695 residues long: Amphiphysin (695 aa).

2 coiled-coil regions span residues 10-83 (AKNV…SLHE) and 144-191 (DYDS…QEEL). The 217-residue stretch at 24–240 (VLQKLGKADE…MTKLGDQHAD (217 aa)) folds into the BAR domain. 2 disordered regions span residues 244-312 (TIQG…VTPT) and 486-617 (GAPG…EASQ). Ser-252 carries the post-translational modification Phosphoserine. Thr-260 is subject to Phosphothreonine. The segment covering 261–274 (PSPPEEPSPLPSPT) has biased composition (pro residues). Residues Ser-262, Ser-268, Ser-272, and Ser-276 each carry the phosphoserine modification. Thr-280 is subject to Phosphothreonine. Phosphoserine occurs at positions 506 and 638. The 74-residue stretch at 622–695 (GFLYKVETLH…FPENFTRRLD (74 aa)) folds into the SH3 domain.

In terms of assembly, heterodimer with BIN1. Binds SH3GLB1. Interacts with REPS1 and SGIP1. Binds AP2A2. Interacts with AP2B1. Interacts with DNM1 and SYNJ1. As to expression, neurons, certain endocrine cell types and spermatocytes.

It localises to the cytoplasmic vesicle. It is found in the secretory vesicle. The protein resides in the synaptic vesicle membrane. The protein localises to the cytoplasm. Its subcellular location is the cytoskeleton. In terms of biological role, may participate in mechanisms of regulated exocytosis in synapses and certain endocrine cell types. May control the properties of the membrane associated cytoskeleton. The protein is Amphiphysin (AMPH) of Homo sapiens (Human).